A 95-amino-acid polypeptide reads, in one-letter code: Putative septation protein SpoVG (95 aa).

Belongs to the SpoVG family.

Could be involved in septation. In Brevibacillus brevis (strain 47 / JCM 6285 / NBRC 100599), this protein is Putative septation protein SpoVG.